The primary structure comprises 882 residues: Translation initiation factor IF-2 (882 aa).

A disordered region spans residues 28-296 (GIRKSADDSV…LQQGFQKPAQ (269 aa)). The segment covering 67 to 81 (STLNIPGTGGKSKSV) has biased composition (polar residues). A compositionally biased stretch (basic and acidic residues) spans 92–209 (VKRDPQEAER…RMAEENKWTD (118 aa)). Residues 244 to 258 (GRGRNAKAARPKKGN) are compositionally biased toward basic residues. The span at 259 to 272 (KHAESKADREEARA) shows a compositional bias: basic and acidic residues. A tr-type G domain is found at 381–550 (PRAPVVTIMG…LLQAEVLELK (170 aa)). The segment at 390-397 (GHVDHGKT) is G1. GTP is bound at residue 390–397 (GHVDHGKT). The interval 415 to 419 (GITQH) is G2. The segment at 436–439 (DTPG) is G3. GTP contacts are provided by residues 436–440 (DTPGH) and 490–493 (NKID). The segment at 490-493 (NKID) is G4. Residues 526–528 (SAK) are G5. Position 800 is an N6-acetyllysine (Lys-800).

This sequence belongs to the TRAFAC class translation factor GTPase superfamily. Classic translation factor GTPase family. IF-2 subfamily.

The protein localises to the cytoplasm. Its function is as follows. One of the essential components for the initiation of protein synthesis. Protects formylmethionyl-tRNA from spontaneous hydrolysis and promotes its binding to the 30S ribosomal subunits. Also involved in the hydrolysis of GTP during the formation of the 70S ribosomal complex. This chain is Translation initiation factor IF-2, found in Shigella boydii serotype 4 (strain Sb227).